The following is a 129-amino-acid chain: Follitropin subunit beta (129 aa).

The first 18 residues, 1–18 (MKSVQLCLLLWCWRAICC), serve as a signal peptide directing secretion. 6 disulfides stabilise this stretch: cysteine 21/cysteine 69, cysteine 35/cysteine 84, cysteine 38/cysteine 122, cysteine 46/cysteine 100, cysteine 50/cysteine 102, and cysteine 105/cysteine 112. N-linked (GlcNAc...) asparagine glycans are attached at residues asparagine 25 and asparagine 42.

Belongs to the glycoprotein hormones subunit beta family. As to quaternary structure, heterodimer. The active follitropin is a heterodimer composed of an alpha chain/CGA shared with other hormones and a unique beta chain/FSHB shown here.

Its subcellular location is the secreted. Its function is as follows. Together with the alpha chain CGA constitutes follitropin, the follicle-stimulating hormone, and provides its biological specificity to the hormone heterodimer. Binds FSHR, a G protein-coupled receptor, on target cells to activate downstream signaling pathways. Follitropin is involved in follicle development and spermatogenesis in reproductive organs. In Meriones unguiculatus (Mongolian jird), this protein is Follitropin subunit beta (FSHB).